Reading from the N-terminus, the 207-residue chain is Large ribosomal subunit protein uL4 (207 aa).

The segment at 52-76 is disordered; the sequence is KNTSLVSGGGKKPWKQKGTGRARQG.

It belongs to the universal ribosomal protein uL4 family. Part of the 50S ribosomal subunit.

One of the primary rRNA binding proteins, this protein initially binds near the 5'-end of the 23S rRNA. It is important during the early stages of 50S assembly. It makes multiple contacts with different domains of the 23S rRNA in the assembled 50S subunit and ribosome. Its function is as follows. Forms part of the polypeptide exit tunnel. This is Large ribosomal subunit protein uL4 from Myxococcus xanthus (strain DK1622).